A 229-amino-acid chain; its full sequence is Vitellogenin (229 aa).

Residues 1–136 (IVMLKNDNVE…SWILAAESCR (136 aa)) enclose the VWFD domain. An N-linked (GlcNAc...) asparagine glycan is attached at Asn198.

In terms of tissue distribution, expressed in liver, ovary and, to a lesser extent, in muscle, intestine, skin, kidney and heart.

Its function is as follows. Precursor of the egg-yolk proteins that are sources of nutrients during early development of oviparous organisms. In terms of biological role, probably binds tetrodotoxin in the ovary. In Takifugu pardalis (Panther puffer), this protein is Vitellogenin.